The following is a 156-amino-acid chain: Ribosome maturation factor RimP (156 aa).

This sequence belongs to the RimP family.

It localises to the cytoplasm. Required for maturation of 30S ribosomal subunits. The protein is Ribosome maturation factor RimP of Shouchella clausii (strain KSM-K16) (Alkalihalobacillus clausii).